Here is a 380-residue protein sequence, read N- to C-terminus: Alanine racemase (380 aa).

The Proton acceptor; specific for D-alanine role is filled by lysine 34. Lysine 34 is subject to N6-(pyridoxal phosphate)lysine. Residue arginine 135 coordinates substrate. The active-site Proton acceptor; specific for L-alanine is the tyrosine 267. A substrate-binding site is contributed by methionine 315.

This sequence belongs to the alanine racemase family. Pyridoxal 5'-phosphate serves as cofactor.

It carries out the reaction L-alanine = D-alanine. The protein operates within amino-acid biosynthesis; D-alanine biosynthesis; D-alanine from L-alanine: step 1/1. Functionally, catalyzes the interconversion of L-alanine and D-alanine. May also act on other amino acids. The protein is Alanine racemase (alr) of Lawsonia intracellularis (strain PHE/MN1-00).